The primary structure comprises 222 residues: MTIHTSRIIMSTDAFLTLTQWLSPGFPVGAYAYSHGLEQVIDCGDMRDAKALQDWVEDILEHGSGTSDGILLAASYKALPEDVSRIDAIARAFASSAERVTETVDQGAAFAKAVDAIWATDLGQLCYPVAVGRAACAQGLPLDLTLEIYTHAFAANLVSAAVRLVPLGQTEGQAVLAALAPLIRQVARRCHDAGIDDLTTACMALDIAAMHHETQYSKVFRT.

This sequence belongs to the UreF family. In terms of assembly, ureD, UreF and UreG form a complex that acts as a GTP-hydrolysis-dependent molecular chaperone, activating the urease apoprotein by helping to assemble the nickel containing metallocenter of UreC. The UreE protein probably delivers the nickel.

The protein resides in the cytoplasm. Required for maturation of urease via the functional incorporation of the urease nickel metallocenter. This is Urease accessory protein UreF from Roseobacter denitrificans (strain ATCC 33942 / OCh 114) (Erythrobacter sp. (strain OCh 114)).